The primary structure comprises 193 residues: Segregation and condensation protein B (193 aa).

Belongs to the ScpB family. In terms of assembly, homodimer. Homodimerization may be required to stabilize the binding of ScpA to the Smc head domains. Component of a cohesin-like complex composed of ScpA, ScpB and the Smc homodimer, in which ScpA and ScpB bind to the head domain of Smc. The presence of the three proteins is required for the association of the complex with DNA.

The protein localises to the cytoplasm. In terms of biological role, participates in chromosomal partition during cell division. May act via the formation of a condensin-like complex containing Smc and ScpA that pull DNA away from mid-cell into both cell halves. The polypeptide is Segregation and condensation protein B (Streptococcus thermophilus (strain ATCC BAA-250 / LMG 18311)).